A 149-amino-acid polypeptide reads, in one-letter code: Putative pre-16S rRNA nuclease (149 aa).

It belongs to the YqgF nuclease family.

Its subcellular location is the cytoplasm. Could be a nuclease involved in processing of the 5'-end of pre-16S rRNA. The sequence is that of Putative pre-16S rRNA nuclease from Synechococcus elongatus (strain ATCC 33912 / PCC 7942 / FACHB-805) (Anacystis nidulans R2).